Here is a 307-residue protein sequence, read N- to C-terminus: Ribosomal RNA small subunit methyltransferase H (307 aa).

Residues 33–35, Asp51, Phe82, Asp96, and Gln103 contribute to the S-adenosyl-L-methionine site; that span reads GGY.

It belongs to the methyltransferase superfamily. RsmH family.

It is found in the cytoplasm. The enzyme catalyses cytidine(1402) in 16S rRNA + S-adenosyl-L-methionine = N(4)-methylcytidine(1402) in 16S rRNA + S-adenosyl-L-homocysteine + H(+). Functionally, specifically methylates the N4 position of cytidine in position 1402 (C1402) of 16S rRNA. The polypeptide is Ribosomal RNA small subunit methyltransferase H (Rickettsia massiliae (strain Mtu5)).